Reading from the N-terminus, the 169-residue chain is Diuretic hormone 44 (169 aa).

Residues 1 to 18 form the signal peptide; it reads MILLGILASTTIIGLTSS. The propeptide occupies 19–96; sequence APLSSYERRD…ARRKQERDQR (78 aa). A coiled-coil region spans residues 83-108; that stretch reads MLELARRKQERDQRQIEENRRFLENI. At Gln-97 the chain carries Pyrrolidone carboxylic acid. Isoleucine amide is present on Ile-108. A propeptide spanning residues 109-169 is cleaved from the precursor; it reads GKRSVPVSDA…RVQANELRLL (61 aa).

Residues Ile-66 to Gly-109 may constitute another form of the DH44 peptide, which has not been detected yet. As to expression, expressed in brain, ventral ganglia and the retrocerebral complex (at protein level).

It is found in the secreted. In terms of biological role, regulation of fluid secretion. The sequence is that of Diuretic hormone 44 from Camponotus floridanus (Florida carpenter ant).